Reading from the N-terminus, the 433-residue chain is E1B 55 kDa protein (433 aa).

This sequence belongs to the adenoviridae E1B 55 kDa protein family. As to quaternary structure, interacts with host PML-4 and PML-5; this interaction promotes efficient subnuclear targeting of E1B-55K to PML nuclear bodies. Interacts with E4-ORF3 protein. Interacts with E4-ORF6 protein.

The protein resides in the host nucleus. The protein localises to the host cytoplasm. Plays a major role to prevent cellular inhibition of viral genome replication. Assembles an SCF-like E3 ubiquitin ligase complex based on the cellular proteins ELOB, ELOC, CUL5 and RBX1, in cooperation with viral E4orf6. This viral RING-type ligase ubiquitinates cellular substrates and targets them to proteasomal degradation: TP53/p53, LIG4, MRE11-RAD50-NBS1 (MRN) complex, ITGA3, DAXX and BLM. E1B-55K probably acts as the substrate-specific adapter of the SCF-like E3 ubiquitin ligase complex. Degradation of host TP53/p53 activity is essential for preventing E1A-induced TP53 accumulation that would otherwise lead to cell apoptosis and growth arrest. E1B-55K also inactivates TP53 transcription-factor activity by binding its transactivation domain. E1B-55K also functions as a SUMO1 E3 ligase for TP53 which causes the latter to be sequestered in promyelocytic leukemia (PML) nuclear bodies thereby contributing to maximal inhibition of TP53 function. This is E1B 55 kDa protein from Murine adenovirus A serotype 1 (MAdV-1).